Here is a 312-residue protein sequence, read N- to C-terminus: Short chain dehydrogenase pgmD (312 aa).

NADP(+) is bound by residues Val46, Ile47, Lys171, Tyr207, Lys211, and Thr242. Residue Tyr207 is the Proton donor of the active site. Lys211 (lowers pKa of active site Tyr) is an active-site residue.

This sequence belongs to the short-chain dehydrogenases/reductases (SDR) family.

It participates in pigment biosynthesis. Its pathway is secondary metabolite biosynthesis. In terms of biological role, short chain dehydrogenase; part of the gene cluster that mediates the biosynthesis of pleosporalin A, ascomycone A, as well as a third cryptic naphthoquinone derived pigment, all responsible for the coloration of conidia. Essential for the production of pleosporalin A, but not the 2 other final products. The pathway begins with the biosynthesis of the cyclized heptaketide 3-acetonyl-1,6,8-trihydroxy-2-naphthaldehyde by the NR-PKS pgmA. The C-6 hydroxyl group is further methylated by the O-methyltransferase pgmB to yield fusarubinaldehyde which is in turn oxidized by the cytochrome P450 monooxygenase pgmC at C-9. The C-1 hydroxyl group is then methylated spontaneously. Although pgmE, pgmD and pgmH are essential for the production of pleosporalin A, it is not the case for the 2 other final products and it remains difficult to assign a specific function to each enzyme. PgmF and pgmG seem not to be involved in pigment biosynthesis although they were regulated by the cluster-specific transcription factor pgmR. The chain is Short chain dehydrogenase pgmD from Aspergillus terreus (strain NIH 2624 / FGSC A1156).